A 66-amino-acid polypeptide reads, in one-letter code: uncharacterized protein (66 aa).

This is an uncharacterized protein from Archaeoglobus fulgidus (strain ATCC 49558 / DSM 4304 / JCM 9628 / NBRC 100126 / VC-16).